The primary structure comprises 258 residues: UPF0758 protein BamMC406_2419 (258 aa).

Residues 13–42 (CRDPADAPAAPARHTGPARPRKRRPRNWKP) form a disordered region. The span at 31–42 (RPRKRRPRNWKP) shows a compositional bias: basic residues. Residues 136 to 258 (QIDSPGAVED…TFSFARAGWL (123 aa)) form the MPN domain. The Zn(2+) site is built by His-207, His-209, and Asp-220. Positions 207 to 220 (HNHPSGAVQPSAED) match the JAMM motif motif.

This sequence belongs to the UPF0758 family.

This Burkholderia ambifaria (strain MC40-6) protein is UPF0758 protein BamMC406_2419.